The chain runs to 499 residues: Probable dipeptidase B (499 aa).

The active site involves cysteine 26.

This sequence belongs to the peptidase C69 family.

The enzyme catalyses an L-aminoacyl-L-amino acid + H2O = 2 an L-alpha-amino acid. The chain is Probable dipeptidase B (pepDB) from Streptococcus pyogenes serotype M18 (strain MGAS8232).